The sequence spans 191 residues: Pyridoxal 5'-phosphate synthase subunit PdxT (191 aa).

Position 48-50 (48-50) interacts with L-glutamine; that stretch reads GES. Residue Cys-79 is the Nucleophile of the active site. Residues Arg-106 and 134–135 contribute to the L-glutamine site; that span reads IR. Residues His-170 and Glu-172 each act as charge relay system in the active site.

This sequence belongs to the glutaminase PdxT/SNO family. In terms of assembly, in the presence of PdxS, forms a dodecamer of heterodimers. Only shows activity in the heterodimer.

It catalyses the reaction aldehydo-D-ribose 5-phosphate + D-glyceraldehyde 3-phosphate + L-glutamine = pyridoxal 5'-phosphate + L-glutamate + phosphate + 3 H2O + H(+). The catalysed reaction is L-glutamine + H2O = L-glutamate + NH4(+). The protein operates within cofactor biosynthesis; pyridoxal 5'-phosphate biosynthesis. Functionally, catalyzes the hydrolysis of glutamine to glutamate and ammonia as part of the biosynthesis of pyridoxal 5'-phosphate. The resulting ammonia molecule is channeled to the active site of PdxS. This Oenococcus oeni (strain ATCC BAA-331 / PSU-1) protein is Pyridoxal 5'-phosphate synthase subunit PdxT.